Consider the following 578-residue polypeptide: Proline--tRNA ligase (578 aa).

The protein belongs to the class-II aminoacyl-tRNA synthetase family. ProS type 1 subfamily. In terms of assembly, homodimer.

It localises to the cytoplasm. It catalyses the reaction tRNA(Pro) + L-proline + ATP = L-prolyl-tRNA(Pro) + AMP + diphosphate. Catalyzes the attachment of proline to tRNA(Pro) in a two-step reaction: proline is first activated by ATP to form Pro-AMP and then transferred to the acceptor end of tRNA(Pro). As ProRS can inadvertently accommodate and process non-cognate amino acids such as alanine and cysteine, to avoid such errors it has two additional distinct editing activities against alanine. One activity is designated as 'pretransfer' editing and involves the tRNA(Pro)-independent hydrolysis of activated Ala-AMP. The other activity is designated 'posttransfer' editing and involves deacylation of mischarged Ala-tRNA(Pro). The misacylated Cys-tRNA(Pro) is not edited by ProRS. This Burkholderia vietnamiensis (strain G4 / LMG 22486) (Burkholderia cepacia (strain R1808)) protein is Proline--tRNA ligase.